The chain runs to 155 residues: Ribosomal RNA large subunit methyltransferase H (155 aa).

Residues leucine 73, glycine 104, and 123-128 (LSPLTL) each bind S-adenosyl-L-methionine.

The protein belongs to the RNA methyltransferase RlmH family. As to quaternary structure, homodimer.

It localises to the cytoplasm. It catalyses the reaction pseudouridine(1915) in 23S rRNA + S-adenosyl-L-methionine = N(3)-methylpseudouridine(1915) in 23S rRNA + S-adenosyl-L-homocysteine + H(+). Functionally, specifically methylates the pseudouridine at position 1915 (m3Psi1915) in 23S rRNA. This Pseudomonas putida (strain GB-1) protein is Ribosomal RNA large subunit methyltransferase H.